We begin with the raw amino-acid sequence, 315 residues long: Long form salivary protein D7L2 (315 aa).

The N-terminal stretch at 1 to 18 (MIVAPVVLSIFLQLFVQA) is a signal peptide. Disulfide bonds link Cys37–Cys73, Cys69–Cys128, Cys178–Cys211, and Cys252–Cys263.

This sequence belongs to the PBP/GOBP family. Interacts with host coagulation factor XII/F12 (inactive and activated). Interacts with host coagulation factor XI/F11 (inactive).

The protein localises to the secreted. In terms of biological role, modulates blood feeding of female mosquitoes on vertebrate species by binding and sequestering different mediators involved in the host response. Binds leukotriene B4 and leukotriene D4. Exhibits anticoagulant activity targeting the intrinsic coagulation pathway; binds coagulation factors XII and XI, preventing generation of activated FXIIa and FXIa. This is Long form salivary protein D7L2 from Anopheles gambiae (African malaria mosquito).